The sequence spans 84 residues: Small ribosomal subunit protein uS17 (84 aa).

It belongs to the universal ribosomal protein uS17 family. As to quaternary structure, part of the 30S ribosomal subunit.

Functionally, one of the primary rRNA binding proteins, it binds specifically to the 5'-end of 16S ribosomal RNA. The protein is Small ribosomal subunit protein uS17 of Borrelia recurrentis (strain A1).